The chain runs to 445 residues: ATP-dependent protease ATPase subunit HslU (445 aa).

Residues I17, 59–64 (GVGKTE), D254, E319, and R391 contribute to the ATP site.

Belongs to the ClpX chaperone family. HslU subfamily. In terms of assembly, a double ring-shaped homohexamer of HslV is capped on each side by a ring-shaped HslU homohexamer. The assembly of the HslU/HslV complex is dependent on binding of ATP.

The protein resides in the cytoplasm. Its function is as follows. ATPase subunit of a proteasome-like degradation complex; this subunit has chaperone activity. The binding of ATP and its subsequent hydrolysis by HslU are essential for unfolding of protein substrates subsequently hydrolyzed by HslV. HslU recognizes the N-terminal part of its protein substrates and unfolds these before they are guided to HslV for hydrolysis. This Pseudomonas fluorescens (strain Pf0-1) protein is ATP-dependent protease ATPase subunit HslU.